We begin with the raw amino-acid sequence, 334 residues long: MKTLGEFIVEKQHDFSHATGELTALLSAIKLGAKIIHRDINKAGLVDILGASGISNVQGEVQMKLDLYANEKLKAALKARGEVAGIASEEEDEIVIFEGDKAENAKYVVLMDPLDGSSNIDVNVSVGTIFSIYRRITPLGTSVTEADFLQPGSQQVAAGYIVYGSSTMLVYTTGHGVHAFTYDPSLGVFCLSHEKVCFPEKGNMYSINEGNYIKFPSGVKKYIKYCQEQDEETQRPYTSRYIGSLVADFHRNLLKGGIYLYPSTASYPKGKLRLLYECNPMAFLAEQAGGKASDGKHRILDITPEKLHQRSPFFVGTESMVDDVERFIREFPDA.

Residues E89, D112, L114, and D115 each coordinate Mg(2+). Substrate is bound by residues 115–118, N208, Y241, 259–261, and K271; these read DGSS and YLY. E277 provides a ligand contact to Mg(2+).

It belongs to the FBPase class 1 family. As to quaternary structure, homotetramer. Mg(2+) is required as a cofactor.

It is found in the cytoplasm. It carries out the reaction beta-D-fructose 1,6-bisphosphate + H2O = beta-D-fructose 6-phosphate + phosphate. It participates in carbohydrate biosynthesis; gluconeogenesis. The sequence is that of Fructose-1,6-bisphosphatase class 1 from Pectobacterium atrosepticum (strain SCRI 1043 / ATCC BAA-672) (Erwinia carotovora subsp. atroseptica).